The sequence spans 238 residues: Ethylene-responsive transcription factor ERN3 (238 aa).

Residues 24–81 (KFVGVRQRASGKWAAEIKDTSKNIRMWLGTYKTAEEAARAYDEAAFLLRGTNTRTNFS) constitute a DNA-binding region (AP2/ERF).

The protein belongs to the AP2/ERF transcription factor family. ERF subfamily. Expressed in roots, root hairs and leaves.

The protein resides in the nucleus. Its function is as follows. Transcription factor involved in symbiotic nodule signaling in response to rhizobial Nod factors (NFs). Binds to the GCC box (NF-responsive box) of ENOD11 promoter. May act as transcriptional repressor of NF-responsive box-containing target gene promoters in root hairs. The polypeptide is Ethylene-responsive transcription factor ERN3 (Medicago truncatula (Barrel medic)).